Consider the following 1768-residue polypeptide: Callose synthase 11 (1768 aa).

The Cytoplasmic segment spans residues 1–308; that stretch reads MRRQRPSVAT…WNVYRSFDRL (308 aa). The helical transmembrane segment at 309-329 threads the bilayer; sequence WILLLLYLQAAIIVATSDVKF. Residues 330 to 335 lie on the Extracellular side of the membrane; it reads PWQDRD. A helical membrane pass occupies residues 336–356; the sequence is VEVALLTVFISWAGLRLLQSV. Topologically, residues 357-370 are cytoplasmic; the sequence is LDASTQYSLVSRET. Residues 371–391 form a helical membrane-spanning segment; the sequence is YWLFIRLTLKFVVAVAWTVLF. Topologically, residues 392 to 421 are extracellular; sequence SVFYARIWSQKNKDGVWSRAANERVVTFLK. Residues 422–442 traverse the membrane as a helical segment; the sequence is VVFVYVIPELLALVLFIVPCI. Residues 443 to 480 lie on the Cytoplasmic side of the membrane; it reads RNWVEELNLGVVYFLTWWFYSKTFVGRGMREGLVDNVK. A helical membrane pass occupies residues 481-501; that stretch reads YTLFWIIVLATKFIFSYFLQI. Residues 502 to 530 lie on the Extracellular side of the membrane; the sequence is RPLIAPTRALLNLKDATYNWHEFFGSTHR. The chain crosses the membrane as a helical span at residues 531–551; it reads IAVGMLWLPVILVYLMDLQIW. The Cytoplasmic segment spans residues 552–1341; the sequence is YSIYSSLVGA…FFRMLSFFYT (790 aa). Residues 1342 to 1362 traverse the membrane as a helical segment; the sequence is TVGYYFNTMLIVFTVYAFLWG. At 1363 to 1386 the chain is on the extracellular side; the sequence is RLYLALSGVEKIAKDRSSSNEALG. Residues 1387-1407 traverse the membrane as a helical segment; that stretch reads AILNQQFIIQLGLFTALPMIL. Over 1408 to 1413 the chain is Cytoplasmic; the sequence is ENSLER. Residues 1414–1434 traverse the membrane as a helical segment; sequence GFLPAVWDFITMQLQLASFFY. The Extracellular segment spans residues 1435–1481; that stretch reads TFSMGTRTHYFGRTILHGGAKYRATGRGFVVEHKKFAENYRLYARTH. Residues 1482-1502 form a helical membrane-spanning segment; that stretch reads FIKAIELAIILLVYAAYSPLA. The Cytoplasmic segment spans residues 1503-1508; sequence KSSFVY. A helical transmembrane segment spans residues 1509 to 1529; it reads ILMTISSWFLITSWIISPFLF. Topologically, residues 1530 to 1583 are extracellular; that stretch reads NPSGFDWLKTVNDFDDFIAWLWSRGGLFTKADQSWFTWWNEEQEHLKTTGVWGK. Residues 1584–1604 form a helical membrane-spanning segment; it reads LLEIILDLRFFFFQYSIVYHL. Over 1605-1612 the chain is Cytoplasmic; it reads RIAENRTS. A helical membrane pass occupies residues 1613 to 1633; it reads IGVYLISWGCIIGIVAIYITT. Residues 1634–1649 lie on the Extracellular side of the membrane; the sequence is IYAQKRYSVKEHIKYR. The chain crosses the membrane as a helical span at residues 1650 to 1670; sequence FIQFLVILLTVLVVVMMLQFT. Over 1671 to 1673 the chain is Cytoplasmic; it reads KLT. Residues 1674–1694 form a helical membrane-spanning segment; the sequence is VVDLLISLLAFVPTGWGLISI. The Extracellular portion of the chain corresponds to 1695-1719; sequence AQVLKPFLLSTVVWDTVISVARFYD. The helical transmembrane segment at 1720 to 1740 threads the bilayer; sequence LFFGLIVMAPVALLSWLPGFQ. The Cytoplasmic portion of the chain corresponds to 1741–1768; it reads NMQTRILFNEAFSRGLQISIILAGKKST.

Belongs to the glycosyltransferase 48 family. In terms of tissue distribution, ubiquitous.

Its subcellular location is the cell membrane. It catalyses the reaction [(1-&gt;3)-beta-D-glucosyl](n) + UDP-alpha-D-glucose = [(1-&gt;3)-beta-D-glucosyl](n+1) + UDP + H(+). Required the formation of the callose wall separating the tetraspores (interstitial wall), but not for the callose wall surrounding the pollen mother cells (peripheral wall). Functionally redudant to CALS12 (GSL5). During plant growth and development, callose is found as a transitory component of the cell plate in dividing cells, is a major component of pollen mother cell walls and pollen tubes, and is found as a structural component of plasmodesmatal canals. The sequence is that of Callose synthase 11 (CALS11) from Arabidopsis thaliana (Mouse-ear cress).